The primary structure comprises 722 residues: Tudor domain-containing protein 3 (722 aa).

In terms of domain architecture, UBA spans 264–304 (LVDEKALRHITEMGFSKEASRQALMDNGNNLEAALNVLLNS). 3 disordered regions span residues 305–342 (NKQKPVTGPPLRGKGKGRGRIRSEDEEELGNARPSAPS), 355–453 (LSVE…RSYS), and 470–526 (SDTV…HFYD). Phosphoserine is present on Ser-327. Residues 362 to 388 (SQPQQLHQGQNRVSNTEQNGVKDNNQP) show a composition bias toward polar residues. 2 stretches are compositionally biased toward basic and acidic residues: residues 392-409 (PRNDTRQPRNEKPPRFQR) and 442-453 (AEERTKCDRSYS). Lys-541 participates in a covalent cross-link: Glycyl lysine isopeptide (Lys-Gly) (interchain with G-Cter in SUMO2). Residues 626 to 686 (LWKSGDECLA…RPIQSEAWEE (61 aa)) form the Tudor domain. The span at 695–704 (EFRRGGDGQP) shows a compositional bias: basic and acidic residues. The interval 695 to 722 (EFRRGGDGQPRRSTRPTQQFYQPPRARN) is disordered. An EBM motif; may mediate interaction with the EJC region spans residues 702–722 (GQPRRSTRPTQQFYQPPRARN).

Component of mRNA stress granules. Interacts with FMR1, FXR1, FXR2, EWSR1, FUS, SERBP1, EEF1A1 and DDX3X or DDX3Y, and with the small nuclear ribonucleoprotein-associated proteins SNRPB and SNRPN. Interacts with 'Lys-48'-linked tetra-ubiquitin, but not with monoubiquitin or 'Lys-63'-linked ubiquitin chains. May interact with the exon junction complex (EJC) composed at least of CASC3, EIF4A3, MAGOH and RBM8A. Interacts with POLR2A (via the C-terminal domain (CTD)).

Its subcellular location is the cytoplasm. The protein localises to the nucleus. In terms of biological role, scaffolding protein that specifically recognizes and binds dimethylarginine-containing proteins. Plays a role in the regulation of translation of target mRNAs by binding Arg/Gly-rich motifs (GAR) in dimethylarginine-containing proteins. In nucleus, acts as a coactivator: recognizes and binds asymmetric dimethylation on the core histone tails associated with transcriptional activation (H3R17me2a and H4R3me2a) and recruits proteins at these arginine-methylated loci. In cytoplasm, acts as an antiviral factor that participates in the assembly of stress granules together with G3BP1. The protein is Tudor domain-containing protein 3 (TDRD3) of Bos taurus (Bovine).